Reading from the N-terminus, the 95-residue chain is Small ribosomal subunit protein uS19 (95 aa).

This sequence belongs to the universal ribosomal protein uS19 family.

Protein S19 forms a complex with S13 that binds strongly to the 16S ribosomal RNA. The protein is Small ribosomal subunit protein uS19 of Bdellovibrio bacteriovorus (strain ATCC 15356 / DSM 50701 / NCIMB 9529 / HD100).